Here is a 154-residue protein sequence, read N- to C-terminus: Endoribonuclease YbeY (154 aa).

Zn(2+) contacts are provided by histidine 113, histidine 117, and histidine 123.

This sequence belongs to the endoribonuclease YbeY family. Zn(2+) serves as cofactor.

Its subcellular location is the cytoplasm. Single strand-specific metallo-endoribonuclease involved in late-stage 70S ribosome quality control and in maturation of the 3' terminus of the 16S rRNA. This chain is Endoribonuclease YbeY, found in Ehrlichia canis (strain Jake).